The primary structure comprises 387 residues: SpoIVD-associated factor A (387 aa).

The LysM domain maps to lysine 2–valine 47. Disordered regions lie at residues serine 49–leucine 106 and asparagine 355–glutamate 387. A compositionally biased stretch (basic and acidic residues) spans lysine 70 to serine 96. Residues proline 368 to glutamine 377 show a composition bias toward polar residues.

Its subcellular location is the spore cortex. In terms of biological role, probably involved in the assembly of some coat protein components implicated in both lysozyme resistance and germination. Could be required for the assembly of CotG. Associates with SpoIVD during the early stage of coat assembly. The sequence is that of SpoIVD-associated factor A (safA) from Bacillus subtilis (strain 168).